Here is a 536-residue protein sequence, read N- to C-terminus: Fanconi anemia group E protein (536 aa).

The interaction with FANCC stretch occupies residues 150–371 (MEGASPLSER…VLTRSLFLGR (222 aa)). The tract at residues 171 to 252 (LGLGGRRLKS…ADGGSASPIK (82 aa)) is disordered. Over residues 230-239 (EKERPEHKSL) the composition is skewed to basic and acidic residues. At S249 the chain carries Phosphoserine. T346 carries the phosphothreonine; by CHEK1 modification. The residue at position 374 (S374) is a Phosphoserine; by CHEK1.

As to quaternary structure, belongs to the multisubunit FA complex composed of FANCA, FANCB, FANCC, FANCE, FANCF, FANCG, FANCL/PHF9 and FANCM. The complex is not found in FA patients. Interacts with FANCC and FANCD2. Phosphorylated. Phosphorylation by CHEK1 at Thr-346 and Ser-374 regulates its function in DNA cross-links repair. Post-translationally, ubiquitinated. Phosphorylation by CHEK1 induces polyubiquitination and degradation.

The protein localises to the nucleus. Its function is as follows. As part of the Fanconi anemia (FA) complex functions in DNA cross-links repair. Required for the nuclear accumulation of FANCC and provides a critical bridge between the FA complex and FANCD2. In Homo sapiens (Human), this protein is Fanconi anemia group E protein (FANCE).